The chain runs to 279 residues: NAD kinase (279 aa).

Asp61 (proton acceptor) is an active-site residue. Residues 61–62, 138–139, Lys149, Lys166, Asp168, and 179–184 each bind NAD(+); these read DG, ND, and TGYSFS.

Belongs to the NAD kinase family. It depends on a divalent metal cation as a cofactor.

It localises to the cytoplasm. It carries out the reaction NAD(+) + ATP = ADP + NADP(+) + H(+). In terms of biological role, involved in the regulation of the intracellular balance of NAD and NADP, and is a key enzyme in the biosynthesis of NADP. Catalyzes specifically the phosphorylation on 2'-hydroxyl of the adenosine moiety of NAD to yield NADP. This Borrelia garinii subsp. bavariensis (strain ATCC BAA-2496 / DSM 23469 / PBi) (Borreliella bavariensis) protein is NAD kinase.